Consider the following 209-residue polypeptide: Large ribosomal subunit protein uL4 (209 aa).

Residues 45–80 form a disordered region; the sequence is RQGTHKAKERSELSGSTRKLIRQKGSGGARRGDINS.

This sequence belongs to the universal ribosomal protein uL4 family. Part of the 50S ribosomal subunit.

In terms of biological role, one of the primary rRNA binding proteins, this protein initially binds near the 5'-end of the 23S rRNA. It is important during the early stages of 50S assembly. It makes multiple contacts with different domains of the 23S rRNA in the assembled 50S subunit and ribosome. Functionally, forms part of the polypeptide exit tunnel. This chain is Large ribosomal subunit protein uL4, found in Porphyromonas gingivalis (strain ATCC BAA-308 / W83).